The chain runs to 472 residues: Ribosomal protein uS12 methylthiotransferase RimO (472 aa).

The MTTase N-terminal domain maps to 33-143 (NRIGFVSLGC…VLKHVHKYVP (111 aa)). [4Fe-4S] cluster-binding residues include C42, C78, C107, C175, C179, and C182. The Radical SAM core domain maps to 161-398 (LTPKHYAYLK…MEVQAEISAE (238 aa)). The TRAM domain occupies 401 to 467 (ARFVGRTLDI…EHDLWAEVVD (67 aa)).

It belongs to the methylthiotransferase family. RimO subfamily. It depends on [4Fe-4S] cluster as a cofactor.

Its subcellular location is the cytoplasm. It carries out the reaction L-aspartate(89)-[ribosomal protein uS12]-hydrogen + (sulfur carrier)-SH + AH2 + 2 S-adenosyl-L-methionine = 3-methylsulfanyl-L-aspartate(89)-[ribosomal protein uS12]-hydrogen + (sulfur carrier)-H + 5'-deoxyadenosine + L-methionine + A + S-adenosyl-L-homocysteine + 2 H(+). Functionally, catalyzes the methylthiolation of an aspartic acid residue of ribosomal protein uS12. The protein is Ribosomal protein uS12 methylthiotransferase RimO of Shewanella baltica (strain OS195).